A 524-amino-acid chain; its full sequence is Cytochrome P450 monooxygenase drtD (524 aa).

Residues Ser-2–Leu-22 form a helical membrane-spanning segment. Cys-418 contributes to the heme binding site.

Belongs to the cytochrome P450 family. It depends on heme as a cofactor.

The protein resides in the membrane. The protein operates within secondary metabolite biosynthesis; terpenoid biosynthesis. In terms of biological role, cytochrome P450 monooxygenase; part of the gene cluster that mediates the biosynthesis of various drimane-type sesquiterpene esters, compounds that exhibit diverse biological activities and are widely present in eukaryotes. The pathway begins with the synthesis of the backbone drimenol by the terpene cyclase drtB using farnesyl pyrophosphate (FPP) as substrate. The cytochrome P450 monooxygenase drtD is then responsible for the hydroxylations at C-6, C-9 and C-12, as well as the oxidation of hydroxyl groups at C-6 and C-11 to a ketone and an aldehyde, respectively. Then, the biosynthesis can go in two directions, either the hydroxylated drimenol is further hydroxylated at C-2 and C-3 by an enzyme(s) not associated with the drt cluster, or the FAD-binding oxidoreductase drtC further oxidizes C-11 or C-12 to form the butyrolactone ring. DrtB, drtD and drtC are solely responsible for the formation of the different drimane structures observed during drimane sesquiterpenes biosynthesis. The polyketide synthase drtA synthesizes different lengths (C6 and C8) of PKS chains, which are then oxidized to varying degrees by the short-chain dehydrogenase drtF. Finally, these PKS chains are transferred onto drimane sesquiterpenes by the acyltransferase drtE, forming the sesquiterpene esters. In addition to the different fatty acyl-CoA chains produced by drtA, drtE is also able to use cinnamoyl-CoA as a substrate. The chain is Cytochrome P450 monooxygenase drtD from Aspergillus calidoustus.